We begin with the raw amino-acid sequence, 750 residues long: Catalase-peroxidase 1 (750 aa).

The tryptophyl-tyrosyl-methioninium (Trp-Tyr) (with M-264) cross-link spans 90–238 (WHSAGTYRVM…VSAAHMGLIY (149 aa)). Histidine 91 acts as the Proton acceptor in catalysis. Residues 199-218 (NEGHKESGVIDGSESKKGHK) form a disordered region. Basic and acidic residues predominate over residues 200-218 (EGHKESGVIDGSESKKGHK). Residues 238-264 (YVNPEGPDGIPDPVAAARDIRTTFSRM) constitute a cross-link (tryptophyl-tyrosyl-methioninium (Tyr-Met) (with W-90)). Histidine 279 is a heme b binding site.

The protein belongs to the peroxidase family. Peroxidase/catalase subfamily. Homodimer or homotetramer. Predominantly homodimeric. Heme b serves as cofactor. Formation of the three residue Trp-Tyr-Met cross-link is important for the catalase, but not the peroxidase activity of the enzyme.

It is found in the cytoplasm. It catalyses the reaction H2O2 + AH2 = A + 2 H2O. The catalysed reaction is 2 H2O2 = O2 + 2 H2O. Bifunctional enzyme with both catalase and broad-spectrum peroxidase activity. The protein is Catalase-peroxidase 1 of Pyricularia oryzae (strain 70-15 / ATCC MYA-4617 / FGSC 8958) (Rice blast fungus).